Here is a 147-residue protein sequence, read N- to C-terminus: Ribosomal RNA large subunit methyltransferase H (147 aa).

Residues L64, G95, and 114–119 (LSSLTL) each bind S-adenosyl-L-methionine.

It belongs to the RNA methyltransferase RlmH family. In terms of assembly, homodimer.

It is found in the cytoplasm. The enzyme catalyses pseudouridine(1915) in 23S rRNA + S-adenosyl-L-methionine = N(3)-methylpseudouridine(1915) in 23S rRNA + S-adenosyl-L-homocysteine + H(+). Specifically methylates the pseudouridine at position 1915 (m3Psi1915) in 23S rRNA. The chain is Ribosomal RNA large subunit methyltransferase H from Polynucleobacter asymbioticus (strain DSM 18221 / CIP 109841 / QLW-P1DMWA-1) (Polynucleobacter necessarius subsp. asymbioticus).